We begin with the raw amino-acid sequence, 369 residues long: Histidinol-phosphate aminotransferase (369 aa).

K222 is modified (N6-(pyridoxal phosphate)lysine).

Belongs to the class-II pyridoxal-phosphate-dependent aminotransferase family. Histidinol-phosphate aminotransferase subfamily. In terms of assembly, homodimer. Pyridoxal 5'-phosphate is required as a cofactor.

It catalyses the reaction L-histidinol phosphate + 2-oxoglutarate = 3-(imidazol-4-yl)-2-oxopropyl phosphate + L-glutamate. It participates in amino-acid biosynthesis; L-histidine biosynthesis; L-histidine from 5-phospho-alpha-D-ribose 1-diphosphate: step 7/9. This Halalkalibacterium halodurans (strain ATCC BAA-125 / DSM 18197 / FERM 7344 / JCM 9153 / C-125) (Bacillus halodurans) protein is Histidinol-phosphate aminotransferase.